The primary structure comprises 651 residues: Intraflagellar transport protein 70A (651 aa).

TPR repeat units lie at residues 8-41 (DGEY…HTKS), 42-75 (RAAL…HPEV), 140-173 (PDYD…LGYQ), 175-207 (DLAY…GIRE), 379-410 (VTKQ…EKYI), 411-443 (PVLM…CNEH), and 445-478 (TWKL…HYEN). The stretch at 494 to 521 (YIMTSQNEEAEELMRKIEKEEEQISYDD) forms a coiled coil. The TPR 8 repeat unit spans residues 530–563 (CIVNLVIGTLYCAKGNYDFGISRVIKSLEPYNKK).

It belongs to the TTC30/dfy-1/fleer family. As to expression, localizes to the cilia of many ciliated epithelial cell types including pronephric cells, olfactory placode, the brain ventricle and lateral line organs.

Its subcellular location is the cell projection. The protein localises to the cilium. Functionally, plays a role in anterograde intraflagellar transport (IFT), the process by which cilia precursors are transported from the base of the cilium to the site of their incorporation at the tip. Required for polyglutamylation of axonemal tubulin, which is a prerequisite for correct assembly of cilia and for normal cilia beat amplitude. Does not seem to be required for neuronal microtubule polyglutamylation. The protein is Intraflagellar transport protein 70A (ift70a) of Danio rerio (Zebrafish).